Reading from the N-terminus, the 672-residue chain is Leucine-rich repeat receptor-like protein kinase PXC1 (672 aa).

An N-terminal signal peptide occupies residues 1 to 21; that stretch reads MAAKPLLLPLLLLLHLSITLA. At 22–269 the chain is on the extracellular side; sequence QNDTNALTLF…IHSHRGIKPG (248 aa). N-linked (GlcNAc...) asparagine glycans are attached at residues asparagine 23, asparagine 44, and asparagine 101. The stretch at 87-110 is one LRR 1 repeat; that stretch reads LDQLRLLDLHDNRLNGTVSPLTNC. Residue lysine 111 forms a Glycyl lysine isopeptide (Lys-Gly) (interchain with G-Cter in ubiquitin) linkage. LRR repeat units follow at residues 112–134, 135–158, 160–181, and 182–205; these read NLRL…ISFL, KRMI…ILGF, RVLT…FSQM, and KSLL…VVKK. N-linked (GlcNAc...) asparagine glycans are attached at residues asparagine 188 and asparagine 197. The span at 233–249 shows a compositional bias: polar residues; the sequence is ESSNTDQIVPSNPTSIP. Residues 233–254 are disordered; it reads ESSNTDQIVPSNPTSIPHSPVS. The helical transmembrane segment at 270-290 threads the bilayer; that stretch reads IIAAVIGGCVAVIVLVSFGFA. Residues 291 to 672 lie on the Cytoplasmic side of the membrane; that stretch reads FCCGRLDRNG…MSPSLATTDG (382 aa). A disordered region spans residues 300-333; sequence GERSKSGSVETGFVGGGEGKRRSSYGEGGESDAT. A Protein kinase domain is found at 357 to 645; that stretch reads KASAEMLGKG…AEVVKMVEEI (289 aa). ATP is bound by residues 363–371 and lysine 386; that span reads LGKGSLGTV. Residues 650 to 672 form a disordered region; that stretch reads SPVGEDFDESRNSMSPSLATTDG. A compositionally biased stretch (polar residues) spans 661–672; that stretch reads NSMSPSLATTDG.

The protein belongs to the protein kinase superfamily. Ser/Thr protein kinase family. As to expression, expressed in the vascular strands of cotyledons, the shoot apex, hypocotyls, roots, leaves, stems and flowers.

The protein resides in the cell membrane. In terms of biological role, leucine-rich repeat receptor-like protein kinase involved in secondary cell wall formation in xylem fibers. May play a role in a regulatory network which also incorporates the TDR/PXY signaling pathway and regulates the maturation of interfascicular fiber cells. May promote the initiation of secondary cell wall deposition during the procedure of cell expansion. This is Leucine-rich repeat receptor-like protein kinase PXC1 from Arabidopsis thaliana (Mouse-ear cress).